An 899-amino-acid polypeptide reads, in one-letter code: MLKPQIHKPHLVNKLPLGTPFIPSHASIASFSTTSLRTLSVQKCYRRYIRYTSSNIKAIMPDSIGKSIRKKCVVTVQPTISGALTAVTVGLLGTVADSVSDFLGRSFLLELVSSDLDSSGKEKDTVKAYATYDELDKESKLYKYQCEFEVPDDFGEIGAVLVQNERHRDAYVKNIVLDEIVTFTCDSWIHSKFDNPDKRIFFLNKSYLPSETPEGLKSLRQKDLESLRGNGEGERQSFDRIYDYDTYNDIGDPDTDSDMARPVLGGNEHPFPRRCRTGRKMTSTEPWSESRTTLPFYVPRDEDFAEIKQITRGATTLYSVLHGVIPALSSVLKDEDKGFPLFRDIELLYEKGVDIDPPPDSGTLSALPRLVKAITNSTKKVLQFETPRIKHKDSFSWFRDEEFCRQTLAGLNPYSIQLVTEWPLMSKLDPEVYGPAESAITKETVEEEIKGFMTXEEALEQKRLFLLDYHDLLLPYVNKVREIEGTTLYGSRTLMFLTCTGTLRPLAIELTRPPNNGKPQWKHVYTPCWDATDXWLWKLAKAHVLAHDSGYHQLVSHWLRTHCVTEPYIIATNRQLSKMHPIQRLLCPHLRYTMQINGLARLSLINANGIIESSFSPRKYSMQLSSDAYAQKWRFDHEALPADLISRGMAVEDESAPHGIKLTIEDYPFANDGLLLWDAIKQWATAYINHYYPQAKLVESDEELQAWWTEIRTVGHADKKDEPWWPQLKTQQDLIGVVSTIMWVSSGHHSAVNFGQYDFGGYFPNRPTIARTKMPNEDPTFEEWEAFMEKPEDVLLNCFPTQIQATKVMAILDVLSSHSPDEEYIGTSMEASWEAEPAIKSAFEEFCGRLKKLDDIIDSRNRDPILRNRTGAGLVQYQLLKPFSGHGVTGKGVPYSISI.

Residues 1-57 (MLKPQIHKPHLVNKLPLGTPFIPSHASIASFSTTSLRTLSVQKCYRRYIRYTSSNIK) constitute a chloroplast transit peptide. A PLAT domain is found at 83 to 203 (ALTAVTVGLL…DNPDKRIFFL (121 aa)). The Lipoxygenase domain maps to 206 to 899 (SYLPSETPEG…GKGVPYSISI (694 aa)). Residues 252–286 (DPDTDSDMARPVLGGNEHPFPRRCRTGRKMTSTEP) are disordered. His557, His562, His749, Asn753, and Ile899 together coordinate Fe cation.

It belongs to the lipoxygenase family. Fe cation serves as cofactor. As to expression, confined to glandular trichomes in flowers.

Its subcellular location is the plastid. It is found in the chloroplast. The protein operates within lipid metabolism; oxylipin biosynthesis. Functionally, plant lipoxygenases may be involved in a number of diverse aspects of plant physiology including growth and development, pest resistance, and senescence or responses to wounding. Catalyzes the hydroperoxidation of lipids containing a cis,cis-1,4-pentadiene structure. This Tanacetum cinerariifolium (Dalmatian daisy) protein is Lipoxygenase 2, chloroplastic.